The following is a 456-amino-acid chain: Bifunctional protein GlmU (456 aa).

The segment at 1–229 (MLNNAMSVVI…LSEVEGVNNR (229 aa)) is pyrophosphorylase. UDP-N-acetyl-alpha-D-glucosamine is bound by residues 11–14 (LAAG), lysine 25, glutamine 76, 81–82 (GT), 103–105 (YGD), glycine 140, glutamate 154, asparagine 169, and asparagine 227. Aspartate 105 provides a ligand contact to Mg(2+). Asparagine 227 contacts Mg(2+). The tract at residues 230–250 (LQLSRLERVYQSEQAEKLLLA) is linker. The tract at residues 251 to 456 (GVMLRDPARF…EGWRRPVKKK (206 aa)) is N-acetyltransferase. Residues arginine 333 and lysine 351 each coordinate UDP-N-acetyl-alpha-D-glucosamine. Histidine 363 acts as the Proton acceptor in catalysis. 2 residues coordinate UDP-N-acetyl-alpha-D-glucosamine: tyrosine 366 and asparagine 377. Acetyl-CoA is bound by residues alanine 380, 386–387 (NY), serine 405, alanine 423, and arginine 440.

It in the N-terminal section; belongs to the N-acetylglucosamine-1-phosphate uridyltransferase family. The protein in the C-terminal section; belongs to the transferase hexapeptide repeat family. In terms of assembly, homotrimer. Requires Mg(2+) as cofactor.

The protein localises to the cytoplasm. The catalysed reaction is alpha-D-glucosamine 1-phosphate + acetyl-CoA = N-acetyl-alpha-D-glucosamine 1-phosphate + CoA + H(+). The enzyme catalyses N-acetyl-alpha-D-glucosamine 1-phosphate + UTP + H(+) = UDP-N-acetyl-alpha-D-glucosamine + diphosphate. The protein operates within nucleotide-sugar biosynthesis; UDP-N-acetyl-alpha-D-glucosamine biosynthesis; N-acetyl-alpha-D-glucosamine 1-phosphate from alpha-D-glucosamine 6-phosphate (route II): step 2/2. It functions in the pathway nucleotide-sugar biosynthesis; UDP-N-acetyl-alpha-D-glucosamine biosynthesis; UDP-N-acetyl-alpha-D-glucosamine from N-acetyl-alpha-D-glucosamine 1-phosphate: step 1/1. It participates in bacterial outer membrane biogenesis; LPS lipid A biosynthesis. Its function is as follows. Catalyzes the last two sequential reactions in the de novo biosynthetic pathway for UDP-N-acetylglucosamine (UDP-GlcNAc). The C-terminal domain catalyzes the transfer of acetyl group from acetyl coenzyme A to glucosamine-1-phosphate (GlcN-1-P) to produce N-acetylglucosamine-1-phosphate (GlcNAc-1-P), which is converted into UDP-GlcNAc by the transfer of uridine 5-monophosphate (from uridine 5-triphosphate), a reaction catalyzed by the N-terminal domain. The chain is Bifunctional protein GlmU from Escherichia coli O8 (strain IAI1).